A 364-amino-acid polypeptide reads, in one-letter code: Serpentine receptor class epsilon-27 (364 aa).

The next 7 membrane-spanning stretches (helical) occupy residues 31 to 51 (VIASIELILYSICLYIVVVSL), 64 to 84 (FIILVAPFFGIWFELIIGKLI), 125 to 145 (LLIIAGFMEYHYMFSVVFGAV), 167 to 187 (IFIPIALTVFFQIIAITCSCL), 195 to 215 (IITINGTWIVSCACSSIVFFL), 257 to 277 (LIFSELGTISIIGLIIATLLL), and 290 to 310 (NALFLNPFGICTVAMYSIPAW).

It belongs to the nematode receptor-like protein sre family.

The protein resides in the membrane. This is Serpentine receptor class epsilon-27 (sre-27) from Caenorhabditis elegans.